Here is a 292-residue protein sequence, read N- to C-terminus: MEWEQLEYFQTLARMQHVTKAAKSLSITQPALSRSIARLENHLGVPLFDRQGRSISLNQYGHIFLRRVQAMMKEYTEGKEEIQALLKPDQGVVSLGFLHTLGTTLVPDLIGSFQQEYPNISFQLKQNHSYWLLERLKSGDLDLCLLASIKPENPIQWIKLWSEELFVFVPNDHPLASRESITLNEIAGERFILLKKGYALRMTVDELFEKANIQPNIMFEGEEATTAAGFVAAGLGISILPDLKGLDQSKITKIRVSWPECQRVIGIAWIKGRFLSPVAETFKQYVISHFSE.

An HTH lysR-type domain is found at Met1 to Asn58. Residues Val18–Ala37 constitute a DNA-binding region (H-T-H motif).

This sequence belongs to the LysR transcriptional regulatory family.

This is an uncharacterized protein from Bacillus subtilis (strain 168).